The sequence spans 326 residues: Flap endonuclease 1 (326 aa).

Positions methionine 1–arginine 100 are N-domain. Mg(2+) contacts are provided by aspartate 28, aspartate 82, glutamate 154, glutamate 156, aspartate 175, aspartate 177, and aspartate 225. Residues alanine 118–glycine 246 form an I-domain region. Residues valine 318–isoleucine 326 form an interaction with PCNA region.

The protein belongs to the XPG/RAD2 endonuclease family. FEN1 subfamily. In terms of assembly, interacts with PCNA. PCNA stimulates the nuclease activity without altering cleavage specificity. Mg(2+) is required as a cofactor.

Structure-specific nuclease with 5'-flap endonuclease and 5'-3' exonuclease activities involved in DNA replication and repair. During DNA replication, cleaves the 5'-overhanging flap structure that is generated by displacement synthesis when DNA polymerase encounters the 5'-end of a downstream Okazaki fragment. Binds the unpaired 3'-DNA end and kinks the DNA to facilitate 5' cleavage specificity. Cleaves one nucleotide into the double-stranded DNA from the junction in flap DNA, leaving a nick for ligation. Also involved in the base excision repair (BER) pathway. Acts as a genome stabilization factor that prevents flaps from equilibrating into structures that lead to duplications and deletions. Also possesses 5'-3' exonuclease activity on nicked or gapped double-stranded DNA. This chain is Flap endonuclease 1, found in Haloquadratum walsbyi (strain DSM 16790 / HBSQ001).